The sequence spans 729 residues: Fatty acid oxidation complex subunit alpha (729 aa).

The interval 1–189 is enoyl-CoA hydratase/isomerase; it reads MLYKGDTLYL…KIGLVDGVVK (189 aa). Aspartate 296 provides a ligand contact to substrate. Residues 311–729 form a 3-hydroxyacyl-CoA dehydrogenase region; that stretch reads ETPKQAAVLG…ARPVGDLKTA (419 aa). NAD(+)-binding positions include methionine 324, aspartate 343, 400–402, lysine 407, and serine 429; that span reads VVE. Residue histidine 450 is the For 3-hydroxyacyl-CoA dehydrogenase activity of the active site. Residue asparagine 453 participates in NAD(+) binding. Residues asparagine 500 and tyrosine 660 each contribute to the substrate site. The tract at residues 708-729 is disordered; that stretch reads RHNEPYYPPVEPARPVGDLKTA.

The protein in the N-terminal section; belongs to the enoyl-CoA hydratase/isomerase family. This sequence in the C-terminal section; belongs to the 3-hydroxyacyl-CoA dehydrogenase family. In terms of assembly, heterotetramer of two alpha chains (FadB) and two beta chains (FadA).

It catalyses the reaction a (3S)-3-hydroxyacyl-CoA + NAD(+) = a 3-oxoacyl-CoA + NADH + H(+). The enzyme catalyses a (3S)-3-hydroxyacyl-CoA = a (2E)-enoyl-CoA + H2O. The catalysed reaction is a 4-saturated-(3S)-3-hydroxyacyl-CoA = a (3E)-enoyl-CoA + H2O. It carries out the reaction (3S)-3-hydroxybutanoyl-CoA = (3R)-3-hydroxybutanoyl-CoA. It catalyses the reaction a (3Z)-enoyl-CoA = a 4-saturated (2E)-enoyl-CoA. The enzyme catalyses a (3E)-enoyl-CoA = a 4-saturated (2E)-enoyl-CoA. It functions in the pathway lipid metabolism; fatty acid beta-oxidation. In terms of biological role, involved in the aerobic and anaerobic degradation of long-chain fatty acids via beta-oxidation cycle. Catalyzes the formation of 3-oxoacyl-CoA from enoyl-CoA via L-3-hydroxyacyl-CoA. It can also use D-3-hydroxyacyl-CoA and cis-3-enoyl-CoA as substrate. The polypeptide is Fatty acid oxidation complex subunit alpha (Shigella flexneri serotype 5b (strain 8401)).